Reading from the N-terminus, the 96-residue chain is Small ubiquitin-related modifier 2 (96 aa).

Residue Lys11 forms a Glycyl lysine isopeptide (Lys-Gly) (interchain with G-Cter in SUMO) linkage. Positions 16-96 (DHINLKVAGQ…FQQQTGGHRI (81 aa)) constitute a Ubiquitin-like domain. Residue Gly93 forms a Glycyl lysine isopeptide (Gly-Lys) (interchain with K-? in acceptor proteins) linkage. The propeptide occupies 94-96 (HRI).

Belongs to the ubiquitin family. SUMO subfamily. Interacts with sae2 and ube2i. Covalently attached to a number of proteins. Polymeric chains can be formed through Lys-11 cross-linking. In terms of processing, cleavage of precursor form by a sentrin-specific protease is necessary for function.

The protein localises to the nucleus. Its function is as follows. Ubiquitin-like protein that can be covalently attached to proteins as a monomer or as a lysine-linked polymer. Covalent attachment via an isopeptide bond to its substrates requires prior activation by the E1 complex sae1-sae2 and linkage to the E2 enzyme ube2i, and can be promoted by an E3 ligase such as pias1-4. This post-translational modification on lysine residues of proteins plays a crucial role in a number of cellular processes such as nuclear transport, DNA replication and repair, mitosis and signal transduction. Polymeric sumo2 chains are also susceptible to polyubiquitination which functions as a signal for proteasomal degradation of modified proteins. The sequence is that of Small ubiquitin-related modifier 2 from Danio rerio (Zebrafish).